The chain runs to 189 residues: Movement protein p22 (189 aa).

This sequence belongs to the tombusvirus/aureusvirus movement protein p22 family. Interacts with host protein HFI22. In terms of processing, phosphorylated.

The protein localises to the host membrane. Functionally, cell-to-cell movement. Displays RNA-binding activity. This Capsicum annuum (Capsicum pepper) protein is Movement protein p22.